The chain runs to 423 residues: Glutamyl-tRNA(Gln) amidotransferase subunit A (423 aa).

A disordered region spans residues Met-1–Leu-20. The span at Glu-10–Pro-19 shows a compositional bias: acidic residues. Active-site charge relay system residues include Lys-28 and Ser-103. Residues Glu-75–Ala-108 are disordered. Ser-127 serves as the catalytic Acyl-ester intermediate. Positions Asp-183–Asp-206 are disordered.

The protein belongs to the amidase family. GatA subfamily. As to quaternary structure, heterotrimer of A, B and C subunits.

The catalysed reaction is L-glutamyl-tRNA(Gln) + L-glutamine + ATP + H2O = L-glutaminyl-tRNA(Gln) + L-glutamate + ADP + phosphate + H(+). In terms of biological role, allows the formation of correctly charged Gln-tRNA(Gln) through the transamidation of misacylated Glu-tRNA(Gln) in organisms which lack glutaminyl-tRNA synthetase. The reaction takes place in the presence of glutamine and ATP through an activated gamma-phospho-Glu-tRNA(Gln). The chain is Glutamyl-tRNA(Gln) amidotransferase subunit A from Natronomonas pharaonis (strain ATCC 35678 / DSM 2160 / CIP 103997 / JCM 8858 / NBRC 14720 / NCIMB 2260 / Gabara) (Halobacterium pharaonis).